The primary structure comprises 710 residues: Polyribonucleotide nucleotidyltransferase (710 aa).

Asp-486 and Asp-492 together coordinate Mg(2+). Residues 553 to 612 form the KH domain; the sequence is PRFETIKIHPDKIRDIIGKGGATIRSITEETNSSIDIDDDGTVKVYADDNEALQAALNRI. An S1 motif domain is found at 622–690; it reads GAIYEGTVVR…QRGRIKLSIK (69 aa).

This sequence belongs to the polyribonucleotide nucleotidyltransferase family. Component of the RNA degradosome, which is a multiprotein complex involved in RNA processing and mRNA degradation. The cofactor is Mg(2+).

It is found in the cytoplasm. It carries out the reaction RNA(n+1) + phosphate = RNA(n) + a ribonucleoside 5'-diphosphate. Involved in mRNA degradation. Catalyzes the phosphorolysis of single-stranded polyribonucleotides processively in the 3'- to 5'-direction. The chain is Polyribonucleotide nucleotidyltransferase from Cellvibrio japonicus (strain Ueda107) (Pseudomonas fluorescens subsp. cellulosa).